The primary structure comprises 349 residues: Isopentenyl-diphosphate delta-isomerase (349 aa).

Residue 9-10 participates in substrate binding; that stretch reads RK. FMN contacts are provided by residues 65-67, Ser-95, and Asn-124; that span reads AMT. 95-97 contributes to the substrate binding site; sequence STH. Gln-154 contributes to the substrate binding site. A Mg(2+)-binding site is contributed by Glu-155. FMN is bound by residues Lys-186, Ser-211, Thr-216, 262 to 264, and 283 to 284; these read GLR and SR.

This sequence belongs to the IPP isomerase type 2 family. Homooctamer. Dimer of tetramers. Requires FMN as cofactor. NADPH serves as cofactor. Mg(2+) is required as a cofactor.

The protein resides in the cytoplasm. The catalysed reaction is isopentenyl diphosphate = dimethylallyl diphosphate. Involved in the biosynthesis of isoprenoids. Catalyzes the 1,3-allylic rearrangement of the homoallylic substrate isopentenyl (IPP) to its allylic isomer, dimethylallyl diphosphate (DMAPP). The polypeptide is Isopentenyl-diphosphate delta-isomerase (Staphylococcus aureus (strain N315)).